Consider the following 283-residue polypeptide: Elongation factor Ts (283 aa).

An involved in Mg(2+) ion dislocation from EF-Tu region spans residues 84–87 (TDFV).

The protein belongs to the EF-Ts family.

It is found in the cytoplasm. In terms of biological role, associates with the EF-Tu.GDP complex and induces the exchange of GDP to GTP. It remains bound to the aminoacyl-tRNA.EF-Tu.GTP complex up to the GTP hydrolysis stage on the ribosome. In Bifidobacterium longum (strain DJO10A), this protein is Elongation factor Ts.